A 321-amino-acid chain; its full sequence is Corticotropin-releasing factor-binding protein (321 aa).

A signal peptide spans 1–21; the sequence is MTPASRPDWCLILLFLAVLRG. 5 cysteine pairs are disulfide-bonded: Cys59/Cys80, Cys103/Cys140, Cys182/Cys204, Cys237/Cys264, and Cys277/Cys317. Asn203 carries N-linked (GlcNAc...) asparagine glycosylation.

Belongs to the CRF-binding protein family.

It localises to the secreted. In terms of biological role, binds CRF and inactivates it. May prevent inappropriate pituitary-adrenal stimulation in pregnancy. In Xenopus laevis (African clawed frog), this protein is Corticotropin-releasing factor-binding protein (crhbp).